Reading from the N-terminus, the 189-residue chain is Ribosome maturation factor RimM (189 aa).

Residues 118–189 (SGEYYWDDLI…IILVDWDENF (72 aa)) form the PRC barrel domain.

Belongs to the RimM family. As to quaternary structure, binds ribosomal protein uS19.

The protein resides in the cytoplasm. Its function is as follows. An accessory protein needed during the final step in the assembly of 30S ribosomal subunit, possibly for assembly of the head region. Essential for efficient processing of 16S rRNA. May be needed both before and after RbfA during the maturation of 16S rRNA. It has affinity for free ribosomal 30S subunits but not for 70S ribosomes. This Ruthia magnifica subsp. Calyptogena magnifica protein is Ribosome maturation factor RimM.